Consider the following 334-residue polypeptide: D-alanine--D-alanine ligase (334 aa).

The region spanning 121–327 is the ATP-grasp domain; it reads KLWYDALDIP…FSEFLVQCVT (207 aa). ATP is bound at residue 151–206; it reads AFGHWGSIFVKAARQGSSVGCYKVTTEDQIAPAIEAAFGFSEQVLVEQAVKPRELE. Mg(2+) contacts are provided by Asp281, Glu294, and Asn296.

This sequence belongs to the D-alanine--D-alanine ligase family. Mg(2+) is required as a cofactor. Requires Mn(2+) as cofactor.

It is found in the cytoplasm. It catalyses the reaction 2 D-alanine + ATP = D-alanyl-D-alanine + ADP + phosphate + H(+). Its pathway is cell wall biogenesis; peptidoglycan biosynthesis. Functionally, cell wall formation. The sequence is that of D-alanine--D-alanine ligase from Vibrio cholerae serotype O1 (strain ATCC 39315 / El Tor Inaba N16961).